The sequence spans 207 residues: Putative 3-methyladenine DNA glycosylase (207 aa).

It belongs to the DNA glycosylase MPG family.

The chain is Putative 3-methyladenine DNA glycosylase from Burkholderia orbicola (strain MC0-3).